Consider the following 266-residue polypeptide: 5'-nucleotidase SurE (266 aa).

A divalent metal cation-binding residues include Asp8, Asp9, Ser39, and Asn95.

It belongs to the SurE nucleotidase family. A divalent metal cation serves as cofactor.

The protein resides in the cytoplasm. It catalyses the reaction a ribonucleoside 5'-phosphate + H2O = a ribonucleoside + phosphate. Its function is as follows. Nucleotidase that shows phosphatase activity on nucleoside 5'-monophosphates. This is 5'-nucleotidase SurE from Syntrophus aciditrophicus (strain SB).